Reading from the N-terminus, the 336-residue chain is MSAPIIAIDAMGGDFGPHCVVPASIAFLAENSSSQLILVGQPALLEELLSRYPSLDRQRLRVHAASEVIGSDERPSQALRGKPDASMRVALELVRDGRAHACVSAGNTGALMALSRHLLKTLPGIDRPAMVTAVPTEKGHCHLLDLGANVDCSAEHLYQFAVMGAVAAEALGCVSPRVALLNVGTEEIKGNQQVKLAASLLQKAQGLNFSGYIEGDGLYRGEADVVVCDGFVGNILLKASEGLAAMVSARIEQRFRDGLAAKLVGALALPLLRRLRGDIAPARYNGASFLGLQGIVVKSHGSAAEEGFQSALRRAALEVRENLPQRLHGRLEHLLL.

Belongs to the PlsX family. In terms of assembly, homodimer. Probably interacts with PlsY.

It is found in the cytoplasm. It catalyses the reaction a fatty acyl-[ACP] + phosphate = an acyl phosphate + holo-[ACP]. The protein operates within lipid metabolism; phospholipid metabolism. In terms of biological role, catalyzes the reversible formation of acyl-phosphate (acyl-PO(4)) from acyl-[acyl-carrier-protein] (acyl-ACP). This enzyme utilizes acyl-ACP as fatty acyl donor, but not acyl-CoA. This is Phosphate acyltransferase from Pseudomonas aeruginosa (strain UCBPP-PA14).